Consider the following 216-residue polypeptide: Ribosomal RNA small subunit methyltransferase G (216 aa).

S-adenosyl-L-methionine contacts are provided by residues Gly-81, Leu-86, 132 to 133 (VE), and Arg-147.

The protein belongs to the methyltransferase superfamily. RNA methyltransferase RsmG family.

It localises to the cytoplasm. It carries out the reaction guanosine(527) in 16S rRNA + S-adenosyl-L-methionine = N(7)-methylguanosine(527) in 16S rRNA + S-adenosyl-L-homocysteine. In terms of biological role, specifically methylates the N7 position of guanine in position 527 of 16S rRNA. In Hydrogenovibrio crunogenus (strain DSM 25203 / XCL-2) (Thiomicrospira crunogena), this protein is Ribosomal RNA small subunit methyltransferase G.